The primary structure comprises 281 residues: Pantothenate synthetase (281 aa).

Met-30 to His-37 contacts ATP. The active-site Proton donor is His-37. Gln-61 contributes to the (R)-pantoate binding site. Position 61 (Gln-61) interacts with beta-alanine. Gly-147–Asp-150 lines the ATP pocket. A (R)-pantoate-binding site is contributed by Gln-153. ATP contacts are provided by residues Val-176 and Met-184–Arg-187.

The protein belongs to the pantothenate synthetase family. As to quaternary structure, homodimer.

It localises to the cytoplasm. The enzyme catalyses (R)-pantoate + beta-alanine + ATP = (R)-pantothenate + AMP + diphosphate + H(+). Its pathway is cofactor biosynthesis; (R)-pantothenate biosynthesis; (R)-pantothenate from (R)-pantoate and beta-alanine: step 1/1. Functionally, catalyzes the condensation of pantoate with beta-alanine in an ATP-dependent reaction via a pantoyl-adenylate intermediate. This is Pantothenate synthetase from Oleidesulfovibrio alaskensis (strain ATCC BAA-1058 / DSM 17464 / G20) (Desulfovibrio alaskensis).